A 174-amino-acid polypeptide reads, in one-letter code: UPF0316 protein LMHCC_0787 (174 aa).

Helical transmembrane passes span 4–24 (GIFIVATIFVVNILYVTIYTV), 36–56 (LAALSSVFEMIIYVVALSLVL), and 62–82 (IANVLAYAIGFGVGIIVGMKI).

Belongs to the UPF0316 family.

It localises to the cell membrane. The protein is UPF0316 protein LMHCC_0787 of Listeria monocytogenes serotype 4a (strain HCC23).